A 196-amino-acid polypeptide reads, in one-letter code: MAIFEINNSFLICAVSIALNPLLWNIAARSEYNHKTLTKLANGDSKKACYMLAACIFVAGIVRDLIYQNALKQQPTLGIFMNPLVQGIAKLIFCFGSVLVLSSMYKLGLVGTYLGDYFGFLLPERVSGFPFNVNDNPMYNGSTLCFLSTALRYGKVAGLLLTLEVFFVYRIALKFEEPFTAKIYAARDSKQAKKSE.

Position 1 (M1) is a topological domain, lumenal. The segment at residues A2–A28 is an intramembrane region (helical). The Lumenal portion of the chain corresponds to R29–L40. The chain crosses the membrane as a helical span at residues A41–V62. The Cytoplasmic portion of the chain corresponds to R63 to A89. Residues K90–V110 form a helical membrane-spanning segment. C94 to G96 serves as a coordination point for S-adenosyl-L-methionine. Residues G111–Y153 lie on the Lumenal side of the membrane. A helical transmembrane segment spans residues G154–K174. Residues F175–E196 are Cytoplasmic-facing. E176 to E177 provides a ligand contact to S-adenosyl-L-methionine.

The protein belongs to the class VI-like SAM-binding methyltransferase superfamily. PEMT/PEM2 methyltransferase family.

The protein resides in the endoplasmic reticulum membrane. It localises to the mitochondrion membrane. The catalysed reaction is a 1,2-diacyl-sn-glycero-3-phospho-N-methylethanolamine + S-adenosyl-L-methionine = a 1,2-diacyl-sn-glycero-3-phospho-N,N-dimethylethanolamine + S-adenosyl-L-homocysteine + H(+). It carries out the reaction a 1,2-diacyl-sn-glycero-3-phospho-N,N-dimethylethanolamine + S-adenosyl-L-methionine = a 1,2-diacyl-sn-glycero-3-phosphocholine + S-adenosyl-L-homocysteine + H(+). It participates in phospholipid metabolism; phosphatidylcholine biosynthesis. Catalyzes the second two steps of the methylation pathway of phosphatidylcholine biosynthesis, the SAM-dependent methylation of phosphatidylmonomethylethanolamine (PMME) to phosphatidyldimethylethanolamine (PDME) and of PDME to phosphatidylcholine (PC). In Schizosaccharomyces pombe (strain 972 / ATCC 24843) (Fission yeast), this protein is Phosphatidyl-N-methylethanolamine N-methyltransferase.